The chain runs to 525 residues: GMP synthase [glutamine-hydrolyzing] (525 aa).

Residues 9–207 (RILILDFGSQ…VRDICQCEAL (199 aa)) form the Glutamine amidotransferase type-1 domain. The Nucleophile role is filled by Cys-86. Catalysis depends on residues His-181 and Glu-183. In terms of domain architecture, GMPS ATP-PPase spans 208–400 (WTPAKIIDDA…LGLPYDMLYR (193 aa)). Position 235-241 (235-241 (SGGVDSS)) interacts with ATP.

Homodimer.

The catalysed reaction is XMP + L-glutamine + ATP + H2O = GMP + L-glutamate + AMP + diphosphate + 2 H(+). It participates in purine metabolism; GMP biosynthesis; GMP from XMP (L-Gln route): step 1/1. Its function is as follows. Catalyzes the synthesis of GMP from XMP. This chain is GMP synthase [glutamine-hydrolyzing], found in Salmonella paratyphi B (strain ATCC BAA-1250 / SPB7).